A 186-amino-acid chain; its full sequence is TATA-box-binding protein E (186 aa).

Repeat copies occupy residues 10-86 (IENV…FDKL) and 101-179 (VQNI…TSRL).

Belongs to the TBP family.

Its function is as follows. General factor that plays a role in the activation of archaeal genes transcribed by RNA polymerase. Binds specifically to the TATA box promoter element which lies close to the position of transcription initiation. This is TATA-box-binding protein E (tbpE) from Halobacterium salinarum (strain ATCC 700922 / JCM 11081 / NRC-1) (Halobacterium halobium).